A 450-amino-acid chain; its full sequence is Nuclear hormone receptor family member nhr-40 (450 aa).

Residues 28 to 103 (GTLCVVCSDF…MGMDPKAIQH (76 aa)) constitute a DNA-binding region (nuclear receptor). 2 NR C4-type zinc fingers span residues 31-51 (CVVC…CNGC) and 67-91 (CQFS…LKKC). In terms of domain architecture, NR LBD spans 173-450 (DVKAVIEDLL…LIDQLIIVGL (278 aa)).

Belongs to the nuclear hormone receptor family. In terms of tissue distribution, isoform b: Expressed in body wall muscle cells, pharyngeal muscles, rectal gland cells, vulval and uterine muscles and neurons in the head and ventral nerve cord. Isoform c: Expressed in body wall muscle cells, neurons in the head, nerve ring, ventral and dorsal nerve cords and epidermal cells in the tail.

Its subcellular location is the nucleus. Its function is as follows. Orphan nuclear receptor. Plays a role in morphogenesis and elongation during embryonic and larval development. Plays a role in muscle formation and motility. The chain is Nuclear hormone receptor family member nhr-40 from Caenorhabditis elegans.